Here is a 557-residue protein sequence, read N- to C-terminus: Membrane protein insertase YidC (557 aa).

Residues 3-23 form a helical membrane-spanning segment; the sequence is NLRPVLYLSMLLVLFLIWQAW. Residues 34-60 are disordered; the sequence is APGAQEQVMDRDGVPAPPQDVPDAPVS. Helical transmembrane passes span 366-386, 436-456, 480-500, and 514-534; these read VVGN…LVFY, LGGC…YWVL, YFIL…LNPA, and PFVF…YWFV.

It belongs to the OXA1/ALB3/YidC family. Type 1 subfamily. As to quaternary structure, interacts with the Sec translocase complex via SecD. Specifically interacts with transmembrane segments of nascent integral membrane proteins during membrane integration.

It localises to the cell inner membrane. Required for the insertion and/or proper folding and/or complex formation of integral membrane proteins into the membrane. Involved in integration of membrane proteins that insert both dependently and independently of the Sec translocase complex, as well as at least some lipoproteins. Aids folding of multispanning membrane proteins. The sequence is that of Membrane protein insertase YidC from Thioalkalivibrio sulfidiphilus (strain HL-EbGR7).